Consider the following 252-residue polypeptide: Lipoprotein PrgK (252 aa).

The N-terminal stretch at M1–G17 is a signal peptide. The N-palmitoyl cysteine moiety is linked to residue C18. A lipid anchor (S-diacylglycerol cysteine) is attached at C18. The chain crosses the membrane as a helical span at residues F207–V227.

This sequence belongs to the YscJ lipoprotein family.

It localises to the cell outer membrane. Functionally, required for invasion of epithelial cells. Could be involved in protein secretion. In Salmonella typhimurium (strain LT2 / SGSC1412 / ATCC 700720), this protein is Lipoprotein PrgK (prgK).